The primary structure comprises 404 residues: Tryptophan synthase beta chain (404 aa).

Lys99 is modified (N6-(pyridoxal phosphate)lysine).

The protein belongs to the TrpB family. In terms of assembly, tetramer of two alpha and two beta chains. The cofactor is pyridoxal 5'-phosphate.

The enzyme catalyses (1S,2R)-1-C-(indol-3-yl)glycerol 3-phosphate + L-serine = D-glyceraldehyde 3-phosphate + L-tryptophan + H2O. It participates in amino-acid biosynthesis; L-tryptophan biosynthesis; L-tryptophan from chorismate: step 5/5. Its function is as follows. The beta subunit is responsible for the synthesis of L-tryptophan from indole and L-serine. This chain is Tryptophan synthase beta chain, found in Rhizobium rhizogenes (strain K84 / ATCC BAA-868) (Agrobacterium radiobacter).